Here is a 732-residue protein sequence, read N- to C-terminus: Catalase-peroxidase (732 aa).

Residues 1-10 (MDAKTDDKAG) are compositionally biased toward basic and acidic residues. Positions 1–26 (MDAKTDDKAGKCPVAHGPAPRGNRDW) are disordered. The segment at residues 95–217 (WHSAGTYRTT…LGAVQMGLIY (123 aa)) is a cross-link (tryptophyl-tyrosyl-methioninium (Trp-Tyr) (with M-243)). The active-site Proton acceptor is His-96. The tryptophyl-tyrosyl-methioninium (Tyr-Met) (with W-95) cross-link spans 217 to 243 (YVNPEGPNGNPDPLGSAKDIRETFARM). His-258 is a binding site for heme b.

The protein belongs to the peroxidase family. Peroxidase/catalase subfamily. As to quaternary structure, homodimer or homotetramer. Requires heme b as cofactor. Formation of the three residue Trp-Tyr-Met cross-link is important for the catalase, but not the peroxidase activity of the enzyme.

It catalyses the reaction H2O2 + AH2 = A + 2 H2O. The catalysed reaction is 2 H2O2 = O2 + 2 H2O. Functionally, bifunctional enzyme with both catalase and broad-spectrum peroxidase activity. This Rhodopseudomonas palustris (strain BisB18) protein is Catalase-peroxidase.